The following is a 143-amino-acid chain: Transcriptional regulator MraZ (143 aa).

2 consecutive SpoVT-AbrB domains span residues 5-47 (EYEH…TLEE) and 76-119 (AVEV…DRET).

The protein belongs to the MraZ family. Forms oligomers.

It localises to the cytoplasm. Its subcellular location is the nucleoid. The chain is Transcriptional regulator MraZ from Staphylococcus saprophyticus subsp. saprophyticus (strain ATCC 15305 / DSM 20229 / NCIMB 8711 / NCTC 7292 / S-41).